A 299-amino-acid chain; its full sequence is Ribosomal RNA small subunit methyltransferase H (299 aa).

S-adenosyl-L-methionine-binding positions include 36 to 38 (GGH), Asp55, Phe82, Asp97, and Gln104.

It belongs to the methyltransferase superfamily. RsmH family.

It is found in the cytoplasm. It carries out the reaction cytidine(1402) in 16S rRNA + S-adenosyl-L-methionine = N(4)-methylcytidine(1402) in 16S rRNA + S-adenosyl-L-homocysteine + H(+). Specifically methylates the N4 position of cytidine in position 1402 (C1402) of 16S rRNA. The polypeptide is Ribosomal RNA small subunit methyltransferase H (Synechococcus sp. (strain RCC307)).